Reading from the N-terminus, the 66-residue chain is Large ribosomal subunit protein bL35 (66 aa).

The span at 24–43 shows a compositional bias: basic residues; sequence HKKAGKRHNLSKKSKARKRR. The tract at residues 24–44 is disordered; it reads HKKAGKRHNLSKKSKARKRRL.

It belongs to the bacterial ribosomal protein bL35 family.

This Dictyoglomus thermophilum (strain ATCC 35947 / DSM 3960 / H-6-12) protein is Large ribosomal subunit protein bL35.